Reading from the N-terminus, the 69-residue chain is DNA gyrase inhibitor YacG (69 aa).

Residues Cys-7, Cys-10, Cys-26, and Cys-30 each coordinate Zn(2+).

The protein belongs to the DNA gyrase inhibitor YacG family. As to quaternary structure, interacts with GyrB. It depends on Zn(2+) as a cofactor.

Functionally, inhibits all the catalytic activities of DNA gyrase by preventing its interaction with DNA. Acts by binding directly to the C-terminal domain of GyrB, which probably disrupts DNA binding by the gyrase. This is DNA gyrase inhibitor YacG from Shewanella putrefaciens (strain CN-32 / ATCC BAA-453).